The chain runs to 346 residues: Dimethylallyltranstransferase (346 aa).

Residues Lys-96, Arg-99, and His-128 each coordinate isopentenyl diphosphate. Residues Asp-135 and Asp-141 each coordinate Mg(2+). Arg-147 provides a ligand contact to isopentenyl diphosphate.

It belongs to the FPP/GGPP synthase family. Mg(2+) is required as a cofactor.

The enzyme catalyses isopentenyl diphosphate + dimethylallyl diphosphate = (2E)-geranyl diphosphate + diphosphate. Its pathway is isoprenoid biosynthesis; geranyl diphosphate biosynthesis; geranyl diphosphate from dimethylallyl diphosphate and isopentenyl diphosphate: step 1/1. Prenyltransferase involved in the biosynthesis of ambiguines, a family of hapalindole-type alkaloids. Catalyzes the addition of isopentenyl diphosphate (IPP) onto dimethylallyl diphosphate (DMAPP) to form geranyl pyrophosphate (GPP). Cannot use farnesyl diphosphate (FPP) or geranylgeranyl diphosphate (GGPP). The protein is Dimethylallyltranstransferase of Fischerella ambigua (strain UTEX 1903).